Consider the following 541-residue polypeptide: Chloride channel CLIC-like protein 1 (541 aa).

The first 18 residues, 1–18, serve as a signal peptide directing secretion; the sequence is MLCSLLLCGCLLLITGYA. Over 19–184 the chain is Lumenal; the sequence is HDDDWIDPTD…EDYFGVDPYN (166 aa). The chain crosses the membrane as a helical span at residues 185–205; that stretch reads VFMVLLCLLCIVALVATELWT. Topologically, residues 206–217 are cytoplasmic; sequence YVRWHTQLKRVC. Residues 218–238 form a helical membrane-spanning segment; it reads IISFLVSLGWNWIYLYKVAFA. Residues 239–329 are Lumenal-facing; the sequence is QHQANVAKMA…GEFIKALMKE (91 aa). A helical membrane pass occupies residues 330 to 350; sequence IPVLLQIPVLVILALAVLGFC. Topologically, residues 351-541 are cytoplasmic; it reads YGAGQSVPML…GTDPVSSPCG (191 aa). The segment at 362–381 is disordered; the sequence is HFRGPEREPPRALEPDDRRR. Residues 364 to 381 show a composition bias toward basic and acidic residues; that stretch reads RGPEREPPRALEPDDRRR. Residues Ser-434 and Ser-438 each carry the phosphoserine modification. Position 482 is a phosphothreonine (Thr-482). Ser-504 carries the phosphoserine modification. The span at 511–522 shows a compositional bias: basic and acidic residues; that stretch reads QLKTDSECRPHS. A disordered region spans residues 511–541; that stretch reads QLKTDSECRPHSTEAAAAAARGTDPVSSPCG.

The protein belongs to the chloride channel MCLC family. Homomultimers. Interacts with mitochondrial protein PIGBOS1 (via C-terminus); the interaction occurs at the mitochondria-associated endoplasmic reticulum (ER) membrane, a zone of contact between the ER and mitochondrial membranes, but does not appear to play a role in ER-mitochondria tethering and is not affected by ER stress. Interacts with CALR. In terms of tissue distribution, expressed in testis (spermatocytes), liver and lung (at protein level). Expressed in spleen, liver, testis, kidney, heart, brain and lung.

Its subcellular location is the endoplasmic reticulum membrane. It carries out the reaction chloride(in) = chloride(out). It catalyses the reaction bromide(in) = bromide(out). The catalysed reaction is nitrate(in) = nitrate(out). The enzyme catalyses fluoride(in) = fluoride(out). Anion-selective channel with Ca(2+)-dependent and voltage-independent gating. Permeable to small monovalent anions with selectivity for bromide &gt; chloride &gt; nitrate &gt; fluoride. Operates in the endoplasmic reticulum (ER) membrane where it mediates chloride efflux to compensate for the loss of positive charges from the ER lumen upon Ca(2+) release. Contributes to the maintenance of ER Ca(2+) pools and activation of unfolded protein response to prevent accumulation of misfolded proteins in the ER lumen. Particularly involved in ER homeostasis mechanisms underlying motor neurons and retinal photoreceptors survival. The chain is Chloride channel CLIC-like protein 1 from Rattus norvegicus (Rat).